The primary structure comprises 176 residues: ATP-dependent protease subunit HslV (176 aa).

The active site involves T5. Positions 161, 164, and 167 each coordinate Na(+).

This sequence belongs to the peptidase T1B family. HslV subfamily. A double ring-shaped homohexamer of HslV is capped on each side by a ring-shaped HslU homohexamer. The assembly of the HslU/HslV complex is dependent on binding of ATP.

Its subcellular location is the cytoplasm. The catalysed reaction is ATP-dependent cleavage of peptide bonds with broad specificity.. Its activity is regulated as follows. Allosterically activated by HslU binding. Protease subunit of a proteasome-like degradation complex believed to be a general protein degrading machinery. In Desulforamulus reducens (strain ATCC BAA-1160 / DSM 100696 / MI-1) (Desulfotomaculum reducens), this protein is ATP-dependent protease subunit HslV.